A 1036-amino-acid chain; its full sequence is uncharacterized protein (1036 aa).

The next 2 helical transmembrane spans lie at 4 to 24 and 1004 to 1024; these read YLFI…NASL and ILWV…VLFL.

The protein belongs to the MG414/MG415 family.

Its subcellular location is the cell membrane. This is an uncharacterized protein from Mycoplasma genitalium (strain ATCC 33530 / DSM 19775 / NCTC 10195 / G37) (Mycoplasmoides genitalium).